A 351-amino-acid polypeptide reads, in one-letter code: Hydroxymethylglutaryl-CoA synthase (351 aa).

E80 serves as the catalytic Proton donor/acceptor. C112 acts as the Acyl-thioester intermediate in catalysis. C112 and S153 together coordinate (3S)-3-hydroxy-3-methylglutaryl-CoA. A CoA-binding site is contributed by R199. Positions 201 and 234 each coordinate (3S)-3-hydroxy-3-methylglutaryl-CoA. H234 functions as the Proton donor/acceptor in the catalytic mechanism. Residue K239 coordinates CoA. The (3S)-3-hydroxy-3-methylglutaryl-CoA site is built by R243, N266, and S296.

This sequence belongs to the thiolase-like superfamily. Archaeal HMG-CoA synthase family. Interacts with acetoacetyl-CoA thiolase that catalyzes the precedent step in the pathway and with a DUF35 protein. The acetoacetyl-CoA thiolase/HMG-CoA synthase complex channels the intermediate via a fused CoA-binding site, which allows for efficient coupling of the endergonic thiolase reaction with the exergonic HMGCS reaction.

The enzyme catalyses acetoacetyl-CoA + acetyl-CoA + H2O = (3S)-3-hydroxy-3-methylglutaryl-CoA + CoA + H(+). It functions in the pathway metabolic intermediate biosynthesis; (R)-mevalonate biosynthesis; (R)-mevalonate from acetyl-CoA: step 2/3. Functionally, catalyzes the condensation of acetyl-CoA with acetoacetyl-CoA to form 3-hydroxy-3-methylglutaryl-CoA (HMG-CoA). Functions in the mevalonate (MVA) pathway leading to isopentenyl diphosphate (IPP), a key precursor for the biosynthesis of isoprenoid compounds that are building blocks of archaeal membrane lipids. This Thermoplasma acidophilum (strain ATCC 25905 / DSM 1728 / JCM 9062 / NBRC 15155 / AMRC-C165) protein is Hydroxymethylglutaryl-CoA synthase.